The sequence spans 271 residues: Putative phosphoenolpyruvate synthase regulatory protein (271 aa).

G152–T159 lines the ADP pocket.

Belongs to the pyruvate, phosphate/water dikinase regulatory protein family. PSRP subfamily.

The catalysed reaction is [pyruvate, water dikinase] + ADP = [pyruvate, water dikinase]-phosphate + AMP + H(+). It catalyses the reaction [pyruvate, water dikinase]-phosphate + phosphate + H(+) = [pyruvate, water dikinase] + diphosphate. Bifunctional serine/threonine kinase and phosphorylase involved in the regulation of the phosphoenolpyruvate synthase (PEPS) by catalyzing its phosphorylation/dephosphorylation. This is Putative phosphoenolpyruvate synthase regulatory protein from Marinobacter nauticus (strain ATCC 700491 / DSM 11845 / VT8) (Marinobacter aquaeolei).